A 339-amino-acid chain; its full sequence is 1-aminocyclopropane-1-carboxylate deaminase (339 aa).

K52 carries the post-translational modification N6-(pyridoxal phosphate)lysine. S79 serves as the catalytic Nucleophile.

Belongs to the ACC deaminase/D-cysteine desulfhydrase family. In terms of assembly, homotrimer. Pyridoxal 5'-phosphate serves as cofactor.

It catalyses the reaction 1-aminocyclopropane-1-carboxylate + H2O = 2-oxobutanoate + NH4(+). Functionally, catalyzes a cyclopropane ring-opening reaction, the irreversible conversion of 1-aminocyclopropane-1-carboxylate (ACC) to ammonia and alpha-ketobutyrate. Allows growth on ACC as a nitrogen source. This is 1-aminocyclopropane-1-carboxylate deaminase from Rhizobium leguminosarum bv. viciae.